The chain runs to 1050 residues: RecBCD enzyme subunit RecB (1050 aa).

Positions 1-443 (MKPFNIFDSN…LQLVNNYRST (443 aa)) constitute a UvrD-like helicase ATP-binding domain. Positions 1–766 (MKPFNIFDSN…TNYVKLEGTQ (766 aa)) are DNA-binding and helicase activity, interacts with RecC. 21-28 (ASAGTGKT) contributes to the ATP binding site. In terms of domain architecture, UvrD-like helicase C-terminal spans 458 to 701 (SPFLEIPGYL…KITTIHSSKG (244 aa)). The interval 814 to 1050 (PKTIFSFSST…KAIQKCQAYH (237 aa)) is nuclease activity, interacts with RecD and RecA. Residues H859, D945, and D958 each contribute to the Mg(2+) site. The For nuclease activity role is filled by D958.

The protein belongs to the helicase family. UvrD subfamily. As to quaternary structure, heterotrimer of RecB, RecC and RecD. All subunits contribute to DNA-binding. Interacts with RecA. Mg(2+) serves as cofactor.

It catalyses the reaction Exonucleolytic cleavage (in the presence of ATP) in either 5'- to 3'- or 3'- to 5'-direction to yield 5'-phosphooligonucleotides.. The catalysed reaction is Couples ATP hydrolysis with the unwinding of duplex DNA by translocating in the 3'-5' direction.. The enzyme catalyses ATP + H2O = ADP + phosphate + H(+). In terms of biological role, a helicase/nuclease that prepares dsDNA breaks (DSB) for recombinational DNA repair. Binds to DSBs and unwinds DNA via a highly rapid and processive ATP-dependent bidirectional helicase activity. Unwinds dsDNA until it encounters a Chi (crossover hotspot instigator) sequence from the 3' direction. Cuts ssDNA a few nucleotides 3' to the Chi site. The properties and activities of the enzyme are changed at Chi. The Chi-altered holoenzyme produces a long 3'-ssDNA overhang and facilitates RecA-binding to the ssDNA for homologous DNA recombination and repair. Holoenzyme degrades any linearized DNA that is unable to undergo homologous recombination. In the holoenzyme this subunit contributes ATPase, 3'-5' helicase, exonuclease activity and loads RecA onto ssDNA. In Chlamydia pneumoniae (Chlamydophila pneumoniae), this protein is RecBCD enzyme subunit RecB.